The following is a 686-amino-acid chain: Ovotransferrin (686 aa).

Transferrin-like domains lie at 7-333 (VRWC…SLRK) and 345-670 (IQWC…SLNT). 6 disulfide bridges follow: cysteine 10/cysteine 45, cysteine 20/cysteine 36, cysteine 115/cysteine 197, cysteine 160/cysteine 174, cysteine 171/cysteine 182, and cysteine 228/cysteine 242. The tract at residues 333–341 (KDQLTVGPR) is connecting region. Cystine bridges form between cysteine 348–cysteine 380, cysteine 358–cysteine 371, cysteine 405–cysteine 680, cysteine 421–cysteine 643, cysteine 454–cysteine 530, cysteine 478–cysteine 671, cysteine 488–cysteine 502, cysteine 499–cysteine 513, and cysteine 570–cysteine 584. Residue asparagine 473 is glycosylated (N-linked (GlcNAc...) asparagine). An N-linked (GlcNAc...) asparagine glycan is attached at asparagine 548.

The protein belongs to the transferrin family. In terms of assembly, monomer.

The protein resides in the secreted. In terms of biological role, transferrins are iron binding transport proteins which can bind two Fe(3+) ions in association with the binding of an anion, usually bicarbonate. It is responsible for the transport of iron from sites of absorption and heme degradation to those of storage and utilization. Serum transferrin may also have a further role in stimulating cell proliferation. Functionally, ovotransferrin has a bacteriostatic function. Its concentration in avian egg is the highest concentration of any transferrin in vivo. The polypeptide is Ovotransferrin (Anas platyrhynchos (Mallard)).